The primary structure comprises 268 residues: Nitrite transporter NirC (268 aa).

The Cytoplasmic segment spans residues 1–25 (MFTDTINKCAANAARIARLSANNPL). A helical membrane pass occupies residues 26–46 (GFWVSSAMAGAYVGLGIILIF). Topologically, residues 47–59 (TLGNLLDPSVRPL) are periplasmic. A helical transmembrane segment spans residues 60 to 80 (VMGATFGIALTLVIIAGSELF). The Cytoplasmic segment spans residues 81 to 112 (TGHTMFLTFGVKAGSISHGQMWAILPQTWLGN). The chain crosses the membrane as a helical span at residues 113 to 133 (LVGSVFVAMLYSWGGGSLLPV). Residues 134-151 (DTSIVHSVALAKTTAPAM) are Periplasmic-facing. A helical transmembrane segment spans residues 152-172 (VLFFKGALCNWLVCLAIWMAL). Residues 173 to 179 (RTEGAAK) are Cytoplasmic-facing. The chain crosses the membrane as a helical span at residues 180–200 (FIAIWWCLLAFIASGYEHSIA). Residues 201 to 225 (NMTLFALSWFGNHSEAYTLAGIGHN) lie on the Periplasmic side of the membrane. The chain crosses the membrane as a helical span at residues 226–246 (LLWVTLGNTLSGAVFMGLGYW). Over 247–268 (YATPKANRPVADKFNQTETAAG) the chain is Cytoplasmic.

This sequence belongs to the FNT transporter (TC 1.A.16) family.

The protein localises to the cell inner membrane. Catalyzes nitrite uptake and nitrite export across the cytoplasmic membrane. Is up to 10-fold more active than NarK or NarU in nitrite uptake for subsequent reduction in the cytoplasm by the NirB/NirD nitrite reductase. This chain is Nitrite transporter NirC (nirC), found in Escherichia coli (strain K12).